A 292-amino-acid chain; its full sequence is Probable 2-(5''-triphosphoribosyl)-3'-dephosphocoenzyme-A synthase (292 aa).

Belongs to the CitG/MdcB family.

It catalyses the reaction 3'-dephospho-CoA + ATP = 2'-(5''-triphospho-alpha-D-ribosyl)-3'-dephospho-CoA + adenine. The polypeptide is Probable 2-(5''-triphosphoribosyl)-3'-dephosphocoenzyme-A synthase (Shigella sonnei (strain Ss046)).